Consider the following 453-residue polypeptide: Protein ECM18 (453 aa).

The region spanning 130–435 (LLIHGYAASS…SGHNLFLDNP (306 aa)) is the AB hydrolase-1 domain. The short motif at 428–433 (HNLFLD) is the HXXXXD motif element.

The protein belongs to the peptidase S33 family. ABHD4/ABHD5 subfamily.

It is found in the mitochondrion. Functionally, may be involved in cell wall organization and biogenesis. This Saccharomyces cerevisiae (strain ATCC 204508 / S288c) (Baker's yeast) protein is Protein ECM18 (ECM18).